Reading from the N-terminus, the 765-residue chain is Palmitoyltransferase ZDHHC8 (765 aa).

At 1-13 (MPRSPGTRLKPAK) the chain is on the cytoplasmic side. The helical transmembrane segment at 14–34 (YIPVATAAALLVGSSTLFFVF) threads the bilayer. Over 35–52 (TCPWLTRAVSPAVPVYNG) the chain is Lumenal. The chain crosses the membrane as a helical span at residues 53-73 (IIFLFVLANFSMATFMDPGVF). Topologically, residues 74–148 (PRADEDEDKE…NCIGRRNYRY (75 aa)) are cytoplasmic. Residues 104–154 (KWCATCHFYRPPRCSHCSVCDNCVEDFDHHCPWVNNCIGRRNYRYFFLFLL) enclose the DHHC domain. Cysteine 134 acts as the S-palmitoyl cysteine intermediate in catalysis. Residues 149-169 (FFLFLLSLSAHMVGVVAFGLV) traverse the membrane as a helical segment. Residues 170 to 190 (YVLNHAEGLGAAHTTITMAVM) lie on the Lumenal side of the membrane. The chain crosses the membrane as a helical span at residues 191-211 (CVAGLFFIPVIGLTGFHVVLV). Residues 212–765 (TRGRTTNEHV…VGGTTYEISV (554 aa)) lie on the Cytoplasmic side of the membrane. A disordered region spans residues 290 to 386 (LKAGLGRSKS…PGPDSLTLGE (97 aa)). A compositionally biased stretch (basic and acidic residues) spans 301 to 311 (GSLDRLDEKPL). Over residues 333-348 (PRPSSAESALSAQRTS) the composition is skewed to polar residues. At serine 337 the chain carries Phosphoserine. The residue at position 441 (arginine 441) is an Omega-N-methylarginine. The segment at 447-542 (ALQPLRSEGG…PREPSPVRYD (96 aa)) is disordered. Residues serine 606 and serine 627 each carry the phosphoserine modification. Positions 630–747 (SLSSAVSRAP…PGPSASPARH (118 aa)) are disordered. Over residues 639 to 655 (PRTSSSSLQADLANNNA) the composition is skewed to polar residues. Residues 671–680 (QGPPSPPSTP) show a composition bias toward pro residues. A phosphoserine mark is found at serine 675, serine 682, serine 725, and serine 743.

Belongs to the DHHC palmitoyltransferase family. ERF2/ZDHHC9 subfamily.

It localises to the golgi apparatus membrane. The protein resides in the mitochondrion membrane. The enzyme catalyses L-cysteinyl-[protein] + hexadecanoyl-CoA = S-hexadecanoyl-L-cysteinyl-[protein] + CoA. In terms of biological role, palmitoyltransferase that catalyzes the addition of palmitate onto various protein substrates and therefore functions in several unrelated biological processes. Through the palmitoylation of ABCA1 regulates the localization of the transporter to the plasma membrane and thereby regulates its function in cholesterol and phospholipid efflux. Could also pamitoylate the D(2) dopamine receptor DRD2 and regulate its stability and localization to the plasma membrane. Could also play a role in glutamatergic transmission. This Canis lupus familiaris (Dog) protein is Palmitoyltransferase ZDHHC8.